The chain runs to 350 residues: uncharacterized protein (350 aa).

The tract at residues 330-350 is disordered; the sequence is RHPGDLRSEPHYRPSAKLAEF. Positions 331 to 341 are enriched in basic and acidic residues; it reads HPGDLRSEPHY.

This is an uncharacterized protein from Mycobacterium tuberculosis.